A 466-amino-acid polypeptide reads, in one-letter code: Asparagine--tRNA ligase (466 aa).

This sequence belongs to the class-II aminoacyl-tRNA synthetase family. In terms of assembly, homodimer.

Its subcellular location is the cytoplasm. The enzyme catalyses tRNA(Asn) + L-asparagine + ATP = L-asparaginyl-tRNA(Asn) + AMP + diphosphate + H(+). This is Asparagine--tRNA ligase from Shewanella frigidimarina (strain NCIMB 400).